The chain runs to 163 residues: ADP-ribosylation factor-like protein 2-binding protein (163 aa).

This sequence belongs to the ARL2BP family. Interacts with GTP bound ARL2 and ARL3; the complex ARL2-ARL2BP as well as ARL2BP alone, binds to SLC25A4/ANT1. Interaction with ARL2 may be required for cilia basal body localization. Interacts with STAT3; interaction is enhanced with ARL2. Found in a complex with ARL2BP, ARL2 and SLC25A6. Found in a complex with ARL2, ARL2BP and SLC25A4. Interacts with STAT2, STAT3 and STAT4.

It is found in the cytoplasm. The protein resides in the mitochondrion intermembrane space. The protein localises to the cytoskeleton. Its subcellular location is the microtubule organizing center. It localises to the centrosome. It is found in the nucleus. The protein resides in the spindle. The protein localises to the cilium basal body. Together with ARL2, plays a role in the nuclear translocation, retention and transcriptional activity of STAT3. May play a role as an effector of ARL2. The chain is ADP-ribosylation factor-like protein 2-binding protein (ARL2BP) from Macaca fascicularis (Crab-eating macaque).